Consider the following 332-residue polypeptide: Large ribosomal subunit protein mL44 (332 aa).

The N-terminal 30 residues, 1-30 (MASGLVRLLQQGPRCLLAPVAPKLVPPVRG), are a transit peptide targeting the mitochondrion. The RNase III domain maps to 86 to 228 (DLLKTAFVNS…LITQMTGKEL (143 aa)). Positions 236-306 (NPMGLLVEEL…ARVALRKLYG (71 aa)) constitute a DRBM domain.

This sequence belongs to the ribonuclease III family. Mitochondrion-specific ribosomal protein mL44 subfamily. In terms of assembly, component of the mitochondrial ribosome large subunit (39S) which comprises a 16S rRNA and about 50 distinct proteins.

The protein resides in the mitochondrion. In terms of biological role, component of the 39S subunit of mitochondrial ribosome. May have a function in the assembly/stability of nascent mitochondrial polypeptides exiting the ribosome. This chain is Large ribosomal subunit protein mL44 (MRPL44), found in Pongo abelii (Sumatran orangutan).